Here is a 621-residue protein sequence, read N- to C-terminus: UvrABC system protein C (621 aa).

The region spanning 20-98 (MAPGVYCMYA…IKSLAPRYNV (79 aa)) is the GIY-YIG domain. In terms of domain architecture, UVR spans 207-242 (DLLAEELIQAMQVASEHLEFEQAARLRDLLTSLRSM).

The protein belongs to the UvrC family. As to quaternary structure, interacts with UvrB in an incision complex.

Its subcellular location is the cytoplasm. In terms of biological role, the UvrABC repair system catalyzes the recognition and processing of DNA lesions. UvrC both incises the 5' and 3' sides of the lesion. The N-terminal half is responsible for the 3' incision and the C-terminal half is responsible for the 5' incision. This is UvrABC system protein C from Xylella fastidiosa (strain 9a5c).